A 173-amino-acid chain; its full sequence is Alpha-crystallin A chain (173 aa).

The residue at position 1 (methionine 1) is an N-acetylmethionine. The tract at residues 1 to 63 (MDVTIQHPWF…RTVLDSGISE (63 aa)) is required for complex formation with BFSP1 and BFSP2. Glutamine 6 carries the deamidated glutamine; partial modification. At serine 45 the chain carries Phosphoserine. Deamidated glutamine; partial is present on glutamine 50. In terms of domain architecture, sHSP spans 52–162 (LFRTVLDSGI…GHSERAIPVS (111 aa)). An N6-acetyllysine modification is found at lysine 70. Deamidated glutamine; partial is present on glutamine 90. Lysine 99 carries the post-translational modification N6-acetyllysine. Histidine 100 provides a ligand contact to Zn(2+). Asparagine 101 is subject to Deamidated asparagine; partial. Zn(2+) contacts are provided by glutamate 102 and histidine 107. Serine 122 carries the post-translational modification Phosphoserine. Asparagine 123 carries the post-translational modification Deamidated asparagine; partial. The tract at residues 145 to 173 (KVQSGLDAGHSERAIPVSREEKPSSAPSS) is disordered. Glutamine 147 carries the post-translational modification Deamidated glutamine; partial. Positions 153–167 (GHSERAIPVSREEKP) are enriched in basic and acidic residues. Zn(2+) is bound at residue histidine 154. An O-linked (GlcNAc) serine glycan is attached at serine 162.

Belongs to the small heat shock protein (HSP20) family. As to quaternary structure, heteromer composed of three CRYAA and one CRYAB subunits. Inter-subunit bridging via zinc ions enhances stability, which is crucial as there is no protein turn over in the lens. Can also form homodimers and homotetramers (dimers of dimers) which serve as the building blocks of homooligomers. Within homooligomers, the zinc-binding motif is created from residues of 3 different molecules. His-100 and Glu-102 from one molecule are ligands of the zinc ion, and His-107 and His-154 residues from additional molecules complete the site with tetrahedral coordination geometry. Part of a complex required for lens intermediate filament formation composed of BFSP1, BFSP2 and CRYAA. In terms of processing, acetylation at Lys-70 may increase chaperone activity. Post-translationally, undergoes age-dependent proteolytical cleavage at the C-terminus.

It localises to the cytoplasm. It is found in the nucleus. Functionally, contributes to the transparency and refractive index of the lens. Acts as a chaperone, preventing aggregation of various proteins under a wide range of stress conditions. Required for the correct formation of lens intermediate filaments as part of a complex composed of BFSP1, BFSP2 and CRYAA. This is Alpha-crystallin A chain (CRYAA) from Oryctolagus cuniculus (Rabbit).